A 352-amino-acid chain; its full sequence is MDDNKKKALAAALGQIERQFGKGAVMRMGDHDRQAIPAISTGSLGLDIALGIGGLPKGRIVEIYGPESSGKTTLTLSVIAQAQKMGATCAFVDAEHALDPEYAGKLGVNVDDLLVSQPDTGEQALEITDMLVRSNAIDVIVVDSVAALVPKAEIEGEMGDMHVGLQARLMSQALRKITGNIKNANCLVIFINQIRMKIGVMFGSPETTTGGNALKFYASVRLDIRRTGAVKEGDEVVGSETRVKVVKNKVAPPFRQAEFQILYGKGIYLNGEMIDLGVLHGFVEKSGAWYAYNGSKIGQGKANSAKFLADNPDIAATLEKQIRDKLLTAAPDVKAAANREPVDEMEEVDTDI.

Residue G65–T72 participates in ATP binding.

Belongs to the RecA family.

It is found in the cytoplasm. Its function is as follows. Can catalyze the hydrolysis of ATP in the presence of single-stranded DNA, the ATP-dependent uptake of single-stranded DNA by duplex DNA, and the ATP-dependent hybridization of homologous single-stranded DNAs. It interacts with LexA causing its activation and leading to its autocatalytic cleavage. Plays a functional role in the DNA rearrangement associated with the phenotypic switching from a pathogenic smooth to a nonpathogenic rough form in this bacterium. The polypeptide is Protein RecA (Pseudomonas tolaasii).